A 1754-amino-acid polypeptide reads, in one-letter code: Probable outer membrane protein PmpB (1754 aa).

Residues 1–14 (MSSMKWLSATAVFA) form the signal peptide. 2 stretches are compositionally biased toward low complexity: residues 68–105 (NIPT…TPDP) and 212–232 (SETS…PSSS). 6 disordered regions span residues 68 to 109 (NIPT…KGGG), 190 to 235 (SSNS…SRAE), 252 to 271 (PAAQ…GSGG), 397 to 438 (NADA…ATAK), 621 to 668 (AAEN…STPS), and 1299 to 1332 (TSSA…ATTP). Polar residues-rich tracts occupy residues 252-264 (PAAQ…STPS) and 402-412 (ASSSPQSGSGA). Low complexity-rich tracts occupy residues 413–427 (TTVS…GSDS), 636–668 (PTAD…STPS), 1299–1311 (TSSA…VSSS), and 1320–1332 (SAAA…ATTP). Residues 1461-1754 (DDIAYNNFWV…MTSCGARMIF (294 aa)) enclose the Autotransporter domain.

It belongs to the PMP outer membrane protein family.

The protein localises to the secreted. Its subcellular location is the cell wall. It localises to the cell outer membrane. The chain is Probable outer membrane protein PmpB (pmpB) from Chlamydia trachomatis serovar D (strain ATCC VR-885 / DSM 19411 / UW-3/Cx).